A 169-amino-acid polypeptide reads, in one-letter code: Probable inosine/xanthosine triphosphatase (169 aa).

Position 58 (Asp58) interacts with Mg(2+).

It belongs to the YjjX NTPase family. In terms of assembly, homodimer. The cofactor is Mg(2+). It depends on Mn(2+) as a cofactor.

The catalysed reaction is XTP + H2O = XDP + phosphate + H(+). It catalyses the reaction ITP + H2O = IDP + phosphate + H(+). Functionally, phosphatase that hydrolyzes non-canonical purine nucleotides such as XTP and ITP to their respective diphosphate derivatives. Probably excludes non-canonical purines from DNA/RNA precursor pool, thus preventing their incorporation into DNA/RNA and avoiding chromosomal lesions. The sequence is that of Probable inosine/xanthosine triphosphatase from Archaeoglobus fulgidus (strain ATCC 49558 / DSM 4304 / JCM 9628 / NBRC 100126 / VC-16).